The primary structure comprises 512 residues: Keratin, type I cytoskeletal 24 (512 aa).

The segment at 1–21 (MFCSAQKGSCSSRVSSSGAVG) is disordered. The segment at 1-140 (MFCSAQKGSC…GYDGGLLSGS (140 aa)) is head. Residues 8-21 (GSCSSRVSSSGAVG) show a composition bias toward low complexity. The segment at 141–176 (EKQTMQDLNDRLANYLDKVRALEEANTDLECKIKDW) is coil 1A. The IF rod domain maps to 141-455 (EKQTMQDLND…RLLNGDGGGC (315 aa)). A linker 1 region spans residues 177-197 (YGKHGSVKGGSGRDYSQYYSI). A coil 1B region spans residues 198-289 (IEDLKKQILS…KNHEEEMKCM (92 aa)). Residues 290–312 (QGSSGGDVTVEMNAAPGVDLTKL) are linker 12. Residues 313–451 (LNDMRAQYEA…ETYRRLLNGD (139 aa)) are coil 2. The segment at 452–512 (GGGCDYRNLV…VSNISEVKIK (61 aa)) is tail.

It belongs to the intermediate filament family. As to quaternary structure, heterotetramer of two type I and two type II keratins.

This is Keratin, type I cytoskeletal 24 (Krt24) from Mus musculus (Mouse).